The chain runs to 692 residues: Elongation factor G (692 aa).

Residues 8 to 282 enclose the tr-type G domain; sequence EKTRNIGIMA…AVVEYMPAPT (275 aa). GTP-binding positions include 17 to 24, 81 to 85, and 135 to 138; these read AHIDAGKT, DTPGH, and NKMD. The interval 285 to 304 is disordered; sequence PNIKGVHPETGEADERHSSD. Over residues 290–304 the composition is skewed to basic and acidic residues; the sequence is VHPETGEADERHSSD.

Belongs to the TRAFAC class translation factor GTPase superfamily. Classic translation factor GTPase family. EF-G/EF-2 subfamily.

The protein resides in the cytoplasm. Catalyzes the GTP-dependent ribosomal translocation step during translation elongation. During this step, the ribosome changes from the pre-translocational (PRE) to the post-translocational (POST) state as the newly formed A-site-bound peptidyl-tRNA and P-site-bound deacylated tRNA move to the P and E sites, respectively. Catalyzes the coordinated movement of the two tRNA molecules, the mRNA and conformational changes in the ribosome. In Desulfitobacterium hafniense (strain Y51), this protein is Elongation factor G.